The following is a 284-amino-acid chain: Nucleoid occlusion protein (284 aa).

A DNA-binding region (H-T-H motif) is located at residues 143-162 (EALAQRVGKSQSAIANKMRL).

It belongs to the ParB family.

It is found in the cytoplasm. The protein resides in the nucleoid. Its function is as follows. Effects nucleoid occlusion by binding relatively nonspecifically to DNA and preventing the assembly of the division machinery in the vicinity of the nucleoid, especially under conditions that disturb the cell cycle. It helps to coordinate cell division and chromosome segregation by preventing the formation of the Z ring through the nucleoid, which would cause chromosome breakage. The protein is Nucleoid occlusion protein of Listeria innocua serovar 6a (strain ATCC BAA-680 / CLIP 11262).